The chain runs to 504 residues: Glycerol kinase (504 aa).

T16 serves as a coordination point for ADP. 2 residues coordinate ATP: T16 and T17. T16 serves as a coordination point for sn-glycerol 3-phosphate. Residue R20 participates in ADP binding. R86, E87, Y138, and D247 together coordinate sn-glycerol 3-phosphate. Positions 86, 87, 138, 247, and 248 each coordinate glycerol. 2 residues coordinate ADP: T269 and G316. ATP contacts are provided by T269, G316, Q320, and G417. G417 and N421 together coordinate ADP.

The protein belongs to the FGGY kinase family.

It catalyses the reaction glycerol + ATP = sn-glycerol 3-phosphate + ADP + H(+). The protein operates within polyol metabolism; glycerol degradation via glycerol kinase pathway; sn-glycerol 3-phosphate from glycerol: step 1/1. With respect to regulation, inhibited by fructose 1,6-bisphosphate (FBP). In terms of biological role, key enzyme in the regulation of glycerol uptake and metabolism. Catalyzes the phosphorylation of glycerol to yield sn-glycerol 3-phosphate. The polypeptide is Glycerol kinase (Trichodesmium erythraeum (strain IMS101)).